Reading from the N-terminus, the 378-residue chain is Erythronate-4-phosphate dehydrogenase (378 aa).

2 residues coordinate substrate: Ser45 and Thr66. NAD(+)-binding residues include Asp146 and Thr175. The active site involves Arg208. Asp232 is an NAD(+) binding site. Glu237 is an active-site residue. Catalysis depends on His254, which acts as the Proton donor. Residue Gly257 participates in NAD(+) binding. Tyr258 contributes to the substrate binding site.

Belongs to the D-isomer specific 2-hydroxyacid dehydrogenase family. PdxB subfamily. In terms of assembly, homodimer.

The protein localises to the cytoplasm. It catalyses the reaction 4-phospho-D-erythronate + NAD(+) = (R)-3-hydroxy-2-oxo-4-phosphooxybutanoate + NADH + H(+). Its pathway is cofactor biosynthesis; pyridoxine 5'-phosphate biosynthesis; pyridoxine 5'-phosphate from D-erythrose 4-phosphate: step 2/5. Functionally, catalyzes the oxidation of erythronate-4-phosphate to 3-hydroxy-2-oxo-4-phosphonooxybutanoate. The sequence is that of Erythronate-4-phosphate dehydrogenase from Salmonella dublin (strain CT_02021853).